Here is a 624-residue protein sequence, read N- to C-terminus: uncharacterized protein (624 aa).

Positions 1-29 are cleaved as a signal peptide; sequence MRFHRQGTAATVGVLLIVLLGFCWKLSES. Residues asparagine 68, asparagine 150, asparagine 219, asparagine 366, asparagine 441, asparagine 447, asparagine 464, and asparagine 528 are each glycosylated (N-linked (GlcNAc...) asparagine). Residues 141–174 form a disordered region; the sequence is LERRHGRFGNGTHGDHPKGPPPPPPPDEKDRGSQ.

The protein localises to the secreted. This is an uncharacterized protein from Saccharomyces cerevisiae (strain ATCC 204508 / S288c) (Baker's yeast).